The primary structure comprises 569 residues: Small ribosomal subunit protein bS1 (569 aa).

S1 motif domains lie at 52 to 116 (GAIL…LSRE), 134 to 199 (GSIV…VSRR), 220 to 288 (GERR…LGLK), 305 to 375 (GKRV…LGLK), 392 to 462 (GLRV…LGVK), and 479 to 548 (GSDI…LSIK).

It belongs to the bacterial ribosomal protein bS1 family.

Its function is as follows. Binds mRNA; thus facilitating recognition of the initiation point. It is needed to translate mRNA with a short Shine-Dalgarno (SD) purine-rich sequence. This Chlamydia trachomatis serovar D (strain ATCC VR-885 / DSM 19411 / UW-3/Cx) protein is Small ribosomal subunit protein bS1 (rpsA).